A 506-amino-acid chain; its full sequence is MRLNLEHFDIKIGQHKVMFNVADAKELGVNPGDRVRIRGHQSISAIVDTTEDMVPPGTLGVFSEVYEHFEDWDKPVEVVPALRSKSSGVIKKMLDKKSVLQDEIKLLVNDIVEENLSDVELSAFITASYIHGMTDDEVEWLTRAMIDTGDTIEFDTHPVMDKHSIGGVPGNKISLLVVPIVAANGLLIPKTSSRAITGAGGTADLMEVLSPVEFSSEEVKEIAEKVGGALVWGGATNIAPADDKLIRVEYPLSIDPYYQMLASIMAKKGAIGAENVVMDIPIGPSTKVPTVQEGQKLARDLINLGHRLGMNVECAITYGSSPIGRRVGPCLEVREAMKVLESMEGPNSLIEKSAALAGILLEMGGAAPRDRGKELALETLRNGKALEKMKQIIEAQGGDPNIKSDDIQVGQYTADIYASTDGYVIEFDNKWIIEIARLAGAPNDKGAGVAIHKKMGEQVKKGDAILTIYAEKEFKLDLALTTAQRTNPIIVEGMLLKRIPGIYGFQ.

Residues Gly-167, 193-198, and Thr-202 each bind AMP; that span reads SRAITG. Asp-255 (proton donor) is an active-site residue. 2 residues coordinate AMP: Ser-263 and Lys-287.

Belongs to the thymidine/pyrimidine-nucleoside phosphorylase family. Type 2 subfamily.

It carries out the reaction AMP + phosphate = alpha-D-ribose 1,5-bisphosphate + adenine. The enzyme catalyses CMP + phosphate = cytosine + alpha-D-ribose 1,5-bisphosphate. It catalyses the reaction UMP + phosphate = alpha-D-ribose 1,5-bisphosphate + uracil. Its function is as follows. Catalyzes the conversion of AMP and phosphate to adenine and ribose 1,5-bisphosphate (R15P). Exhibits phosphorylase activity toward CMP and UMP in addition to AMP. Functions in an archaeal AMP degradation pathway, together with R15P isomerase and RubisCO. The chain is AMP phosphorylase from Methanosarcina acetivorans (strain ATCC 35395 / DSM 2834 / JCM 12185 / C2A).